Here is a 316-residue protein sequence, read N- to C-terminus: Retinol dehydrogenase 7 (316 aa).

33 to 57 (FITGCDSGFGNLLARQLDRRGMRVL) is a binding site for NADP(+). Ser-163 contributes to the substrate binding site. Catalysis depends on Tyr-175, which acts as the Proton acceptor.

Belongs to the short-chain dehydrogenases/reductases (SDR) family. In terms of tissue distribution, highly expressed in liver. Also expressed in lung, eye, kidney, and brain.

It localises to the microsome. It is found in the endoplasmic reticulum. The enzyme catalyses all-trans-retinol--[retinol-binding protein] + NAD(+) = all-trans-retinal--[retinol-binding protein] + NADH + H(+). The protein operates within cofactor metabolism; retinol metabolism. Functionally, acts on androgens and retinols, i.e. has steroid 3-alpha- and 17-beta-dehydrogenase and cis/trans-retinol catalytic activities. This chain is Retinol dehydrogenase 7 (Rdh7), found in Mus musculus (Mouse).